A 191-amino-acid polypeptide reads, in one-letter code: Retinin (191 aa).

The N-terminal stretch at 1–21 is a signal peptide; it reads MSRLFLPVLAIVLVSIGASHT. The tract at residues 52–88 is disordered; that stretch reads LADGSSGSVSSSAAQPEDQSQEEAEEQQVSSASSGSA. 2 stretches are compositionally biased toward low complexity: residues 55 to 69 and 78 to 88; these read GSSG…QPED and QQVSSASSGSA.

In terms of processing, phosphorylated. Specifically expressed in cornea (at protein level). Detected in retina and cortex.

It localises to the secreted. This Drosophila melanogaster (Fruit fly) protein is Retinin.